A 744-amino-acid chain; its full sequence is Spalt-like protein sem-4 (744 aa).

A disordered region spans residues 6 to 32 (AEMAAVSSRRKQSKPRRMSGEGDAMMS). The span at 13–22 (SRRKQSKPRR) shows a compositional bias: basic residues. 4 C2H2-type zinc fingers span residues 99–124 (SSCP…LDAH), 305–327 (NQCI…YRTH), 333–355 (FKCK…MGVH), and 411–433 (QQCP…ITEH). Over residues 487–497 (KNDSSPNTDTS) the composition is skewed to polar residues. Disordered regions lie at residues 487–530 (KNDS…RQDI) and 542–562 (KLEE…PKNE). Basic and acidic residues predominate over residues 499-509 (VEEKITRDDPP). Over residues 513–525 (SLSPSNSSDSSSS) the composition is skewed to low complexity. Polar residues predominate over residues 551-561 (QQVSTTPNPKN). 3 consecutive C2H2-type zinc fingers follow at residues 589–611 (HQCG…MRTH), 617–639 (FKCD…MGTH), and 701–723 (TVCS…LKEH). The interval 725-744 (NNGSSAAPTPLASAATPPPS) is disordered. Residues 728–744 (SSAAPTPLASAATPPPS) are compositionally biased toward low complexity.

The protein belongs to the sal C2H2-type zinc-finger protein family.

It is found in the nucleus. In terms of biological role, transcription factor, involved in positive and negative modulation of transcription. Binds to multiple DNA sequence motifs in the regulatory elements of target genes, including homeobox selector egl-5 and LIM homeobox mec-3. Involved in cell-fate regulation in multiple lineages, including neuronal, mesodermal and vulval. Required to regulate the fate of PLM touch receptor neurons, acting via negative modulation of transcription of egl-5 and mec-3. May modulate gene expression by interacting with different transcription factors during neuronal and mesodermal cell development. Promotes the proliferative sex myoblast (SM) fate, in a cell autonomous manner, acting via the SoxC transcription factor sem-2. Involved in vulval cell-fate determination, acting by regulating expression of homeobox protein lin-39, and may link lin-39 to incoming signaling pathways. Plays a role in detoxification of reactive oxygen species (ROS), by regulating expression of transcription factor skn-1 and the phase II detoxification genes. The sequence is that of Spalt-like protein sem-4 from Caenorhabditis elegans.